We begin with the raw amino-acid sequence, 352 residues long: C-C chemokine receptor type 5 (352 aa).

Residues 1–30 (MDYQVSSPTYDIDYYTSEPCQKVNVKQIAA) are Extracellular-facing. Residue Tyr3 is modified to Sulfotyrosine. O-linked (GalNAc...) serine glycosylation is found at Ser6 and Ser7. Tyr10, Tyr14, and Tyr15 each carry sulfotyrosine. Cystine bridges form between Cys20/Cys269 and Cys101/Cys178. Residues 31–58 (RLLPPLYSLVFIFGFVGNILVVLILINC) form a helical membrane-spanning segment. The Cytoplasmic portion of the chain corresponds to 59–68 (KRLKSMTDIY). A helical membrane pass occupies residues 69–89 (LLNLAISDLFFLLTVPFWAHY). Over 90 to 102 (AAAQWDFGNTMCQ) the chain is Extracellular. Residues 103-124 (LLTGLYFIGFFSGIFFIILLTI) form a helical membrane-spanning segment. The Cytoplasmic segment spans residues 125 to 141 (DRYLAIVHAVFALKART). A helical membrane pass occupies residues 142–166 (VTFGVVTSVITWVVAVFASLPGIIF). The Extracellular segment spans residues 167–198 (TRSQREGLHYTCSSHFPYSQYQFWKNFQTLKI). The helical transmembrane segment at 199–218 (VILGLVLPLLVMVICYSGIL) threads the bilayer. The Cytoplasmic segment spans residues 219–235 (KTLLRCRSEKKRHRAVR). The chain crosses the membrane as a helical span at residues 236 to 260 (LIFTIMIVYFLFWAPYNIVLLLNTF). Topologically, residues 261–277 (QEFFGLNNCSSSNRLDQ) are extracellular. A helical membrane pass occupies residues 278–301 (AMQVTETLGMTHCCINPIIYAFVG). At 302-352 (EKFRNYLLVFFQKHIAKHFCKCCSIFQQEAPERASSVYTRSTGEQEISVGL) the chain is on the cytoplasmic side. Residues Cys321, Cys323, and Cys324 are each lipidated (S-palmitoyl cysteine). Phosphoserine; by BARK1 is present on residues Ser336, Ser337, Ser342, and Ser349.

Belongs to the G-protein coupled receptor 1 family. As to quaternary structure, interacts with PRAF2. Efficient ligand binding to CCL3/MIP-1alpha and CCL4/MIP-1beta requires sulfation, O-glycosylation and sialic acid modifications. Glycosylation on Ser-6 is required for efficient binding of CCL4. Interacts with GRK2. Interacts with ARRB1 and ARRB2. Interacts with CNIH4. Interacts with S100A4; this interaction stimulates T-lymphocyte chemotaxis. Sulfated on at least 2 of the N-terminal tyrosines. Sulfation is required for efficient binding of the chemokines, CCL3 and CCL4. In terms of processing, palmitoylation in the C-terminal is important for cell surface expression. Post-translationally, phosphorylation on serine residues in the C-terminal is stimulated by binding CC chemokines especially by APO-RANTES. O-glycosylated, but not N-glycosylated. Ser-6 appears to be the major site even if Ser-7 may be also O-glycosylated. Also sialylated glycans present which contribute to chemokine binding. Thr-16 and Ser-17 may also be glycosylated and, if so, with small moieties such as a T-antigen.

The protein resides in the cell membrane. Receptor for a number of inflammatory CC-chemokines including CCL3/MIP-1-alpha, CCL4/MIP-1-beta and RANTES and subsequently transduces a signal by increasing the intracellular calcium ion level. May play a role in the control of granulocytic lineage proliferation or differentiation. Participates in T-lymphocyte migration to the infection site by acting as a chemotactic receptor. This Trachypithecus johnii (Nilgiri langur) protein is C-C chemokine receptor type 5 (CCR5).